Reading from the N-terminus, the 85-residue chain is MEKKRYSKRYCRYTEAKISFIDYKDLDMLKHTLSERYKIMPRRLTGNSKKWQERVEVAIKRARHMALIPYIVDRKKVVDSPFKQH.

The protein belongs to the bacterial ribosomal protein bS18 family. As to quaternary structure, part of the 30S ribosomal subunit. Forms a tight heterodimer with protein bS6.

In terms of biological role, binds as a heterodimer with protein bS6 to the central domain of the 16S rRNA, where it helps stabilize the platform of the 30S subunit. This Helicobacter acinonychis (strain Sheeba) protein is Small ribosomal subunit protein bS18.